We begin with the raw amino-acid sequence, 145 residues long: uncharacterized protein (145 aa).

This is an uncharacterized protein from Saccharomyces cerevisiae (strain ATCC 204508 / S288c) (Baker's yeast).